The primary structure comprises 537 residues: MQETGIRNGAFGADKFGLKNLKQVHWNLGAPQLYQYSLAAGEAVLSANGALCADTGEFTGRSPKDKFTVRDASTEKMWWAGNQSITAEQFEALYQDFLKHAEGKTLFAQDLYGGADPTFRIKTRVFTELAWHSLFIRTLLIRPEKIELDTFVPELTIIDMPSFRADPKRHGVRSQNVVAIDFARKIVLIGGSYYAGEMKKSVFTTLNYYLPERGVMPMHCSANVGPKGDTAIFFGLSGTGKTTLSADPNRTLIGDDEHGWGPSGVFNFEGGCYAKCIKLSQEAEPQIFAASNRFGAVLENVVLDEDSRVPDFDDGSKTENTRSAYPLDYIPNASRTGRAPHPKNVVMLAADAFGVLPPIAKLSPAQAMYHFLSGYTAKVAGTERGLGNEPQPEFSTCFGSPFLPLDPSVYGNMLRQLIAEHNVDCWLVNTGWTGGKYGTGSRMPIKVTRALLTAALDGSLRNVEFRTDKYFGFAVPTALPGVPSEILDPVNTWADKAEFDKTARALVGMFQKNFAKFEAQVDADVRAAAPDVKLAAE.

R61, Y194, and K200 together coordinate substrate. Residues K200, H219, and G235–T243 contribute to the ATP site. Positions 200 and 219 each coordinate Mn(2+). D256 is a binding site for Mn(2+). 3 residues coordinate ATP: E284, R322, and T448. R322 contacts substrate.

This sequence belongs to the phosphoenolpyruvate carboxykinase (ATP) family. Requires Mn(2+) as cofactor.

The protein resides in the cytoplasm. It catalyses the reaction oxaloacetate + ATP = phosphoenolpyruvate + ADP + CO2. It functions in the pathway carbohydrate biosynthesis; gluconeogenesis. Involved in the gluconeogenesis. Catalyzes the conversion of oxaloacetate (OAA) to phosphoenolpyruvate (PEP) through direct phosphoryl transfer between the nucleoside triphosphate and OAA. This Bradyrhizobium sp. (strain BTAi1 / ATCC BAA-1182) protein is Phosphoenolpyruvate carboxykinase (ATP).